A 380-amino-acid polypeptide reads, in one-letter code: Mitogen-activated protein kinase 3 (380 aa).

Ala2 bears the N-acetylalanine mark. Residues 43–331 (YTQLQYIGEG…VEEALAHPYL (289 aa)) enclose the Protein kinase domain. Residues 49–57 (IGEGAYGMV) and Lys72 each bind ATP. The active-site Proton acceptor is the Asp167. Phosphothreonine is present on Thr199. Thr203 is modified (phosphothreonine; by MAP2K1 and MAP2K2). The TXY signature appears at 203-205 (TEY). At Tyr205 the chain carries Phosphotyrosine; by MAP2K1 and MAP2K2. Thr208 is subject to Phosphothreonine; by autocatalysis.

This sequence belongs to the protein kinase superfamily. CMGC Ser/Thr protein kinase family. MAP kinase subfamily. Binds both upstream activators and downstream substrates in multimolecular complexes. Found in a complex with at least BRAF, HRAS, MAP2K1/MEK1, MAPK3 and RGS14. Interacts with TPR. Interacts with ADAM15, ARRB2, CANX, DAPK1 (via death domain), HSF4, IER3, MAP2K1/MEK1, NISCH, and SGK1. Interacts with MORG1. Interacts with PEA15. Interacts with isoform 1 of MKNK2 and this binding prevents from dephosphorylation and inactivation. Interacts with CDKN2AIP. Interacts with HSF1 (via D domain and preferentially with hyperphosphorylated form); this interaction occurs upon heat shock. Interacts with CAVIN4. Interacts with GIT1; this interaction is necessary for MAPK3 localization to focal adhesions. Interacts with ZNF263. Interacts with EBF4. The cofactor is Mg(2+). In terms of processing, dually phosphorylated on Thr-203 and Tyr-205, which activates the enzyme. Ligand-activated ALK induces tyrosine phosphorylation. Dephosphorylated by PTPRJ at Tyr-205. Autophosphorylated on threonine and tyrosine residues in vitro. Phosphorylated upon FLT3 and KIT signaling. Ubiquitinated by TRIM15 via 'Lys-63'-linked ubiquitination; leading to activation. Deubiquitinated by CYLD.

The protein localises to the cytoplasm. It is found in the nucleus. The protein resides in the membrane. Its subcellular location is the caveola. It localises to the cell junction. The protein localises to the focal adhesion. It catalyses the reaction L-seryl-[protein] + ATP = O-phospho-L-seryl-[protein] + ADP + H(+). It carries out the reaction L-threonyl-[protein] + ATP = O-phospho-L-threonyl-[protein] + ADP + H(+). Phosphorylated by MAP2K1/MEK1 and MAP2K2/MEK2 on Thr-203 and Tyr-205 in response to external stimuli like insulin or NGF. Both phosphorylations are required for activity. This phosphorylation causes dramatic conformational changes, which enable full activation and interaction of MAPK1/ERK2 with its substrates. Dephosphorylated and inactivated by DUSP3, DUSP6 and DUSP9. Its function is as follows. Serine/threonine kinase which acts as an essential component of the MAP kinase signal transduction pathway. MAPK1/ERK2 and MAPK3/ERK1 are the 2 MAPKs which play an important role in the MAPK/ERK cascade. They participate also in a signaling cascade initiated by activated KIT and KITLG/SCF. Depending on the cellular context, the MAPK/ERK cascade mediates diverse biological functions such as cell growth, adhesion, survival and differentiation through the regulation of transcription, translation, cytoskeletal rearrangements. The MAPK/ERK cascade also plays a role in initiation and regulation of meiosis, mitosis, and postmitotic functions in differentiated cells by phosphorylating a number of transcription factors. About 160 substrates have already been discovered for ERKs. Many of these substrates are localized in the nucleus, and seem to participate in the regulation of transcription upon stimulation. However, other substrates are found in the cytosol as well as in other cellular organelles, and those are responsible for processes such as translation, mitosis and apoptosis. Moreover, the MAPK/ERK cascade is also involved in the regulation of the endosomal dynamics, including lysosome processing and endosome cycling through the perinuclear recycling compartment (PNRC); as well as in the fragmentation of the Golgi apparatus during mitosis. The substrates include transcription factors (such as ATF2, BCL6, ELK1, ERF, FOS, HSF4 or SPZ1), cytoskeletal elements (such as CANX, CTTN, GJA1, MAP2, MAPT, PXN, SORBS3 or STMN1), regulators of apoptosis (such as BAD, BTG2, CASP9, DAPK1, IER3, MCL1 or PPARG), regulators of translation (such as EIF4EBP1) and a variety of other signaling-related molecules (like ARHGEF2, DEPTOR, FRS2 or GRB10). Protein kinases (such as RAF1, RPS6KA1/RSK1, RPS6KA3/RSK2, RPS6KA2/RSK3, RPS6KA6/RSK4, SYK, MKNK1/MNK1, MKNK2/MNK2, RPS6KA5/MSK1, RPS6KA4/MSK2, MAPKAPK3 or MAPKAPK5) and phosphatases (such as DUSP1, DUSP4, DUSP6 or DUSP16) are other substrates which enable the propagation the MAPK/ERK signal to additional cytosolic and nuclear targets, thereby extending the specificity of the cascade. The chain is Mitogen-activated protein kinase 3 (Mapk3) from Mus musculus (Mouse).